The chain runs to 705 residues: Kinesin-like protein KIF2A (705 aa).

Residues 65-185 (DLVPDEDIEP…QQELREKRAQ (121 aa)) form a disordered region. Phosphoserine is present on Ser75. Thr96 carries the phosphothreonine modification. Position 99 is a phosphoserine (Ser99). Position 101 is an N6-acetyllysine (Lys101). The span at 122 to 139 (LPEQSSSAQQNGSVSDIS) shows a compositional bias: polar residues. Phosphoserine occurs at positions 134 and 139. Positions 153–186 (RRKSNCVKEVEKLQEKREKRRLQQQELREKRAQD) form a coiled coil. Over residues 158–185 (CVKEVEKLQEKREKRRLQQQELREKRAQ) the composition is skewed to basic and acidic residues. A Kinesin motor domain is found at 222–552 (RICVCVRKRP…LRYANRVKEL (331 aa)). ATP is bound at residue 312-319 (GQTGSGKT). Gln572 carries the phosphoserine modification. A coiled-coil region spans residues 659-698 (ATQLEAILEQKIDILTELRDKVKSFRAALQEEEQASKQIN).

The protein belongs to the TRAFAC class myosin-kinesin ATPase superfamily. Kinesin family. MCAK/KIF2 subfamily. Interacts with AURKA and PLK1. Interacts with PSRC1. Interacts with MCRS1; the interaction enhances recruitment of KIF2A to the minus ends of spindle microtubules which promotes chromosome alignment.

The protein localises to the cytoplasm. It localises to the cytoskeleton. The protein resides in the microtubule organizing center. Its subcellular location is the centrosome. It is found in the spindle pole. The protein localises to the spindle. Functionally, plus end-directed microtubule-dependent motor required for normal brain development. May regulate microtubule dynamics during axonal growth. Required for normal progression through mitosis. Required for normal congress of chromosomes at the metaphase plate. Required for normal spindle dynamics during mitosis. Promotes spindle turnover. Implicated in formation of bipolar mitotic spindles. Has microtubule depolymerization activity. The sequence is that of Kinesin-like protein KIF2A from Rattus norvegicus (Rat).